Here is a 385-residue protein sequence, read N- to C-terminus: Trehalose-phosphate phosphatase A (385 aa).

The interval 1 to 21 is disordered; that stretch reads MDMKSGHSSPVMTDSPPISNS.

The protein belongs to the trehalose phosphatase family. It depends on a divalent metal cation as a cofactor. In terms of tissue distribution, expressed in flowers.

The catalysed reaction is alpha,alpha-trehalose 6-phosphate + H2O = alpha,alpha-trehalose + phosphate. The protein operates within glycan biosynthesis; trehalose biosynthesis. In terms of biological role, removes the phosphate from trehalose 6-phosphate to produce free trehalose. Trehalose accumulation in plant may improve abiotic stress tolerance. This is Trehalose-phosphate phosphatase A (TPPA) from Arabidopsis thaliana (Mouse-ear cress).